A 162-amino-acid polypeptide reads, in one-letter code: NADH-quinone oxidoreductase subunit I (162 aa).

2 4Fe-4S ferredoxin-type domains span residues 54–83 (RRYE…INST) and 93–122 (SSYE…ETNI). [4Fe-4S] cluster contacts are provided by Cys-63, Cys-66, Cys-69, Cys-73, Cys-102, Cys-105, Cys-108, and Cys-112.

This sequence belongs to the complex I 23 kDa subunit family. As to quaternary structure, NDH-1 is composed of 14 different subunits. Subunits NuoA, H, J, K, L, M, N constitute the membrane sector of the complex. [4Fe-4S] cluster is required as a cofactor.

Its subcellular location is the cell inner membrane. It carries out the reaction a quinone + NADH + 5 H(+)(in) = a quinol + NAD(+) + 4 H(+)(out). NDH-1 shuttles electrons from NADH, via FMN and iron-sulfur (Fe-S) centers, to quinones in the respiratory chain. The immediate electron acceptor for the enzyme in this species is believed to be ubiquinone. Couples the redox reaction to proton translocation (for every two electrons transferred, four hydrogen ions are translocated across the cytoplasmic membrane), and thus conserves the redox energy in a proton gradient. The chain is NADH-quinone oxidoreductase subunit I from Francisella philomiragia subsp. philomiragia (strain ATCC 25017 / CCUG 19701 / FSC 153 / O#319-036).